The sequence spans 275 residues: Putative replication protein (275 aa).

In terms of domain architecture, BRCT spans 98–198 (SKAICFTPYD…RILKISEDYF (101 aa)).

The chain is Putative replication protein from Wigglesworthia glossinidia brevipalpis.